The primary structure comprises 204 residues: Leucyl/phenylalanyl-tRNA--protein transferase (204 aa).

The protein belongs to the L/F-transferase family.

Its subcellular location is the cytoplasm. The enzyme catalyses N-terminal L-lysyl-[protein] + L-leucyl-tRNA(Leu) = N-terminal L-leucyl-L-lysyl-[protein] + tRNA(Leu) + H(+). The catalysed reaction is N-terminal L-arginyl-[protein] + L-leucyl-tRNA(Leu) = N-terminal L-leucyl-L-arginyl-[protein] + tRNA(Leu) + H(+). It carries out the reaction L-phenylalanyl-tRNA(Phe) + an N-terminal L-alpha-aminoacyl-[protein] = an N-terminal L-phenylalanyl-L-alpha-aminoacyl-[protein] + tRNA(Phe). Its function is as follows. Functions in the N-end rule pathway of protein degradation where it conjugates Leu, Phe and, less efficiently, Met from aminoacyl-tRNAs to the N-termini of proteins containing an N-terminal arginine or lysine. This is Leucyl/phenylalanyl-tRNA--protein transferase from Rhizobium etli (strain ATCC 51251 / DSM 11541 / JCM 21823 / NBRC 15573 / CFN 42).